A 55-amino-acid chain; its full sequence is ATP synthase F(0) complex subunit 8 (55 aa).

Residues 10–32 form a helical membrane-spanning segment; it reads FFIMLASWLTFSLIIQPKLLTFV.

It belongs to the ATPase protein 8 family. As to quaternary structure, component of the ATP synthase complex composed at least of ATP5F1A/subunit alpha, ATP5F1B/subunit beta, ATP5MC1/subunit c (homooctomer), MT-ATP6/subunit a, MT-ATP8/subunit 8, ATP5ME/subunit e, ATP5MF/subunit f, ATP5MG/subunit g, ATP5MK/subunit k, ATP5MJ/subunit j, ATP5F1C/subunit gamma, ATP5F1D/subunit delta, ATP5F1E/subunit epsilon, ATP5PF/subunit F6, ATP5PB/subunit b, ATP5PD/subunit d, ATP5PO/subunit OSCP. ATP synthase complex consists of a soluble F(1) head domain (subunits alpha(3) and beta(3)) - the catalytic core - and a membrane F(0) domain - the membrane proton channel (subunits c, a, 8, e, f, g, k and j). These two domains are linked by a central stalk (subunits gamma, delta, and epsilon) rotating inside the F1 region and a stationary peripheral stalk (subunits F6, b, d, and OSCP).

It is found in the mitochondrion membrane. Subunit 8, of the mitochondrial membrane ATP synthase complex (F(1)F(0) ATP synthase or Complex V) that produces ATP from ADP in the presence of a proton gradient across the membrane which is generated by electron transport complexes of the respiratory chain. ATP synthase complex consist of a soluble F(1) head domain - the catalytic core - and a membrane F(1) domain - the membrane proton channel. These two domains are linked by a central stalk rotating inside the F(1) region and a stationary peripheral stalk. During catalysis, ATP synthesis in the catalytic domain of F(1) is coupled via a rotary mechanism of the central stalk subunits to proton translocation. In vivo, can only synthesize ATP although its ATP hydrolase activity can be activated artificially in vitro. Part of the complex F(0) domain. The chain is ATP synthase F(0) complex subunit 8 from Loxigilla noctis (Lesser Antillean bullfinch).